The primary structure comprises 295 residues: Acetyl-coenzyme A carboxylase carboxyl transferase subunit beta (295 aa).

Residues 1-20 (MSWLSKLMPSGIRTENTPAK) are disordered. Residues 28 to 295 (LWEKCSNCGS…QPHPQDADAA (268 aa)) enclose the CoA carboxyltransferase N-terminal domain. The Zn(2+) site is built by Cys-32, Cys-35, Cys-51, and Cys-54. A C4-type zinc finger spans residues 32 to 54 (CSNCGSALYGPELEENLEVCPKC).

This sequence belongs to the AccD/PCCB family. As to quaternary structure, acetyl-CoA carboxylase is a heterohexamer composed of biotin carboxyl carrier protein (AccB), biotin carboxylase (AccC) and two subunits each of ACCase subunit alpha (AccA) and ACCase subunit beta (AccD). It depends on Zn(2+) as a cofactor.

Its subcellular location is the cytoplasm. It catalyses the reaction N(6)-carboxybiotinyl-L-lysyl-[protein] + acetyl-CoA = N(6)-biotinyl-L-lysyl-[protein] + malonyl-CoA. It participates in lipid metabolism; malonyl-CoA biosynthesis; malonyl-CoA from acetyl-CoA: step 1/1. Its function is as follows. Component of the acetyl coenzyme A carboxylase (ACC) complex. Biotin carboxylase (BC) catalyzes the carboxylation of biotin on its carrier protein (BCCP) and then the CO(2) group is transferred by the transcarboxylase to acetyl-CoA to form malonyl-CoA. The chain is Acetyl-coenzyme A carboxylase carboxyl transferase subunit beta from Xanthomonas campestris pv. campestris (strain B100).